The sequence spans 499 residues: Cytochrome P450 monooxygenase notH' (499 aa).

Residues 11–31 form a helical membrane-spanning segment; it reads LGLEPAGWALALLTSSIIYLF. N296 and N427 each carry an N-linked (GlcNAc...) asparagine glycan. A heme-binding site is contributed by C440.

It belongs to the cytochrome P450 family. It depends on heme as a cofactor.

It is found in the membrane. Its pathway is alkaloid biosynthesis. Cytochrome P450 monooxygenase; part of the gene cluster that mediates the biosynthesis of notoamide, a fungal indole alkaloid that belongs to a family of natural products containing a characteristic bicyclo[2.2.2]diazaoctane core. The first step of notoamide biosynthesis involves coupling of L-proline and L-tryptophan by the bimodular NRPS notE', to produce cyclo-L-tryptophan-L-proline called brevianamide F. The reverse prenyltransferase notF' then acts as a deoxybrevianamide E synthase and converts brevianamide F to deoxybrevianamide E via reverse prenylation at C-2 of the indole ring leading to the bicyclo[2.2.2]diazaoctane core. Deoxybrevianamide E is further hydroxylated at C-6 of the indole ring, likely catalyzed by the cytochrome P450 monooxygenase notG', to yield 6-hydroxy-deoxybrevianamide E. 6-hydroxy-deoxybrevianamide E is a specific substrate of the prenyltransferase notC' for normal prenylation at C-7 to produce 6-hydroxy-7-prenyl-deoxybrevianamide, also called notoamide S. As the proposed pivotal branching point in notoamide biosynthesis, notoamide S can be diverted to notoamide E through an oxidative pyran ring closure putatively catalyzed by either notH' cytochrome P450 monooxygenase or the notD' FAD-linked oxidoreductase. This step would be followed by an indole 2,3-epoxidation-initiated pinacol-like rearrangement catalyzed by the notB' FAD-dependent monooxygenase leading to the formation of notoamide C and notoamide D. On the other hand notoamide S is converted to notoamide T by notH' (or notD'), a bifunctional oxidase that also functions as the intramolecular Diels-Alderase responsible for generation of (-)-notoamide T. To generate antipodal (+)-notoaminide T, notH (or notD) in Aspergillus strain MF297-2 is expected to catalyze a Diels-Alder reaction leading to the opposite stereochemistry. The remaining oxidoreductase notD' (or notH') likely catalyzes the oxidative pyran ring formation to yield (-)-stephacidin A. The FAD-dependent monooxygenase notI' is highly similar to notB' and is predicted to catalyze a similar conversion from (-)-stephacidin A to (+)-notoamide B via the 2,3-epoxidation of (-)-stephacidin A followed by a pinacol-type rearrangement. Finally, it remains unclear which enzyme could be responsible for the final hydroxylation steps leading to notoamide A and sclerotiamide. This Aspergillus versicolor protein is Cytochrome P450 monooxygenase notH'.